A 438-amino-acid chain; its full sequence is UPF0229 protein Smed_1028 (438 aa).

The disordered stretch occupies residues 55 to 107 (PARGVNEPAFQPDSNSGERRHVLPGNREFAAGDRIPKRGGGGGAGNAGAGTGQ). A compositionally biased stretch (gly residues) spans 92–105 (RGGGGGAGNAGAGT).

It belongs to the UPF0229 family.

The protein is UPF0229 protein Smed_1028 of Sinorhizobium medicae (strain WSM419) (Ensifer medicae).